The chain runs to 213 residues: MNLLIMGLPGAGKGTQAAKIVETFELIHISTGDMFRAAMANQTEMGVLAKSYIDKGDLVPDEVTNGIVKERLAQADIKEKGFLLDGYPRTIEQAHALDETLEALGLTLDGVINIEVDPASLIDRLSGRIINKKTGETFHKIFNPPVGDYKEEDFYQREDDKPETVKRRLDVNIAQGEPIIKHYRQAGIVRDIDGNKDISEVFADIKKVIENLK.

Residue 10–15 (GAGKGT) participates in ATP binding. Positions 30–59 (STGDMFRAAMANQTEMGVLAKSYIDKGDLV) are NMP. AMP contacts are provided by residues threonine 31, arginine 36, 57–59 (DLV), 86–89 (GYPR), and glutamine 93. Residues 127–160 (GRIINKKTGETFHKIFNPPVGDYKEEDFYQREDD) are LID. ATP-binding positions include arginine 128 and 137–138 (TF). The AMP site is built by arginine 157 and arginine 168. Lysine 196 contributes to the ATP binding site.

This sequence belongs to the adenylate kinase family. In terms of assembly, monomer.

It is found in the cytoplasm. The enzyme catalyses AMP + ATP = 2 ADP. It functions in the pathway purine metabolism; AMP biosynthesis via salvage pathway; AMP from ADP: step 1/1. In terms of biological role, catalyzes the reversible transfer of the terminal phosphate group between ATP and AMP. Plays an important role in cellular energy homeostasis and in adenine nucleotide metabolism. The polypeptide is Adenylate kinase (Streptococcus equi subsp. zooepidemicus (strain H70)).